Here is a 208-residue protein sequence, read N- to C-terminus: Guanylate kinase (208 aa).

Residues 4–185 form the Guanylate kinase-like domain; sequence GNLYILSAPS…ALADLVHILR (182 aa). 11–18 is a binding site for ATP; sequence APSGAGKS.

The protein belongs to the guanylate kinase family.

It localises to the cytoplasm. The catalysed reaction is GMP + ATP = GDP + ADP. In terms of biological role, essential for recycling GMP and indirectly, cGMP. This Mannheimia succiniciproducens (strain KCTC 0769BP / MBEL55E) protein is Guanylate kinase.